The chain runs to 213 residues: Vacuolar ATPase assembly integral membrane protein vph2 (213 aa).

2 consecutive transmembrane segments (helical) span residues 113–133 (ISAI…VWYC) and 142–162 (KIAL…FLYV).

The protein localises to the endoplasmic reticulum membrane. Functionally, required for vacuolar ATPase assembly. In Schizosaccharomyces pombe (strain 972 / ATCC 24843) (Fission yeast), this protein is Vacuolar ATPase assembly integral membrane protein vph2 (vph2).